Reading from the N-terminus, the 326-residue chain is Ribose-phosphate pyrophosphokinase (326 aa).

Residues 45 to 47 and 104 to 105 contribute to the ATP site; these read NGE and RQ. The Mg(2+) site is built by His-138 and Asp-178. Lys-202 is a catalytic residue. D-ribose 5-phosphate is bound by residues Arg-204, Asp-230, and 234–238; that span reads DTGGT.

This sequence belongs to the ribose-phosphate pyrophosphokinase family. Class I subfamily. As to quaternary structure, homohexamer. Requires Mg(2+) as cofactor.

It is found in the cytoplasm. It carries out the reaction D-ribose 5-phosphate + ATP = 5-phospho-alpha-D-ribose 1-diphosphate + AMP + H(+). It functions in the pathway metabolic intermediate biosynthesis; 5-phospho-alpha-D-ribose 1-diphosphate biosynthesis; 5-phospho-alpha-D-ribose 1-diphosphate from D-ribose 5-phosphate (route I): step 1/1. In terms of biological role, involved in the biosynthesis of the central metabolite phospho-alpha-D-ribosyl-1-pyrophosphate (PRPP) via the transfer of pyrophosphoryl group from ATP to 1-hydroxyl of ribose-5-phosphate (Rib-5-P). This is Ribose-phosphate pyrophosphokinase from Mycobacterium bovis (strain ATCC BAA-935 / AF2122/97).